We begin with the raw amino-acid sequence, 154 residues long: Cathelicidin-2 (154 aa).

A signal peptide spans 1–17; sequence MLSCWVLLLALLGGVCA. A propeptide spanning residues 18–122 is cleaved from the precursor; sequence LPAPLSYPQA…RCRDASSDPV (105 aa). Intrachain disulfides connect C75–C86 and C97–C114.

Belongs to the cathelicidin family. As to expression, detected in trachea, lung, proventriculus, duodenum, jejunum, ileum, caeca, colon, caecal tonsil, bursa of Fabricius, kidney, ovary, testis, thymus, liver, spleen, bone marrow, skin, uropygial gland, muscle and brain.

It localises to the secreted. Binds bacterial lipopolysaccharide (LPS). Has potent antimicrobial activity against Gram-positive and Gram-negative bacteria (in vitro). Has hemolytic activity (in vitro). May play a role in the innate immune response. The polypeptide is Cathelicidin-2 (CATHL2) (Gallus gallus (Chicken)).